An 83-amino-acid polypeptide reads, in one-letter code: Lipolysis-activating peptide 1-alpha chain (83 aa).

Residues 1–21 (MNIILFYFMPILISLPGLLAS) form the signal peptide. An LCN-type CS-alpha/beta domain is found at 22-83 (GTYPNDVYGL…LFWDVYKEHC (62 aa)). Disulfide bonds link Cys-35–Cys-58, Cys-44–Cys-63, and Cys-48–Cys-65.

It belongs to the long (3 C-C) scorpion toxin superfamily. Monomer (edited version) and heterodimer (non-edited version) of this alpha chain and a beta chain (AC P0CI43). In terms of tissue distribution, expressed by the venom gland.

Its subcellular location is the secreted. Functionally, the heterodimer non-edited LVP1 induces lipolysis in rat adipocytes. Induction of lipolysis by LVP1 appears to be mediated through the beta-2 adrenergic receptor pathway (ADRB2). In terms of biological role, the edited BmKBTx-like, similar to beta-toxins, may modulate voltage-gated sodium channels (Nav) and may block voltage-gated potassium channels (Kv). The protein is Lipolysis-activating peptide 1-alpha chain of Lychas mucronatus (Chinese swimming scorpion).